A 238-amino-acid chain; its full sequence is Auxin-responsive protein IAA2 (238 aa).

An EAR-like (transcriptional repression) motif is present at residues 24 to 28 (LCLGL). 3 stretches are compositionally biased toward low complexity: residues 33–44 (SSSSSSKPSEGS), 59–69 (ASKPSGAAAAA), and 85–94 (ASSSSSSSKQ). Disordered stretches follow at residues 33–69 (SSSS…AAAA) and 82–114 (RNLA…KDGG). The PB1 domain occupies 118–216 (GMFVKINMDG…TAKRLRVLKS (99 aa)). Residues 217-238 (SDLPPPSLMRAAGSRKRAAADS) are disordered. Over residues 229–238 (GSRKRAAADS) the composition is skewed to basic residues.

It belongs to the Aux/IAA family. In terms of assembly, homodimers and heterodimers. As to expression, highly expressed in flowers.

It localises to the nucleus. Functionally, aux/IAA proteins are short-lived transcriptional factors that function as repressors of early auxin response genes at low auxin concentrations. The chain is Auxin-responsive protein IAA2 (IAA2) from Oryza sativa subsp. japonica (Rice).